A 251-amino-acid chain; its full sequence is VYITNAGDITLSPKGVEMAHVNNVRLYVHGERWTASQPGDWGSQWQVEAPIFVDHGYVSQDCYYPIIKGRSVITNQGFVTAVDLGIRRVNNNWGQAIIRVGSAEACPAAGHPNAVFEFHYDGTFYSPGNGHFNDVYIRSDGRLKINKKELENGALEKVCRLKVYTYDKVKSIKDRSVIKREVGIIAQDLEKELPEAVSKVEVDGSDVLTISNSAVNALLIKAIQEMSEEIKELKTPLFTKIARKISKYFKF.

The tract at residues Asp-134 to Ile-137 is interaction with the receptor-recognizing protein gp38. In terms of domain architecture, Peptidase S74 spans Ser-139–Leu-237.

This sequence belongs to the S16-like long tail fiber protein Gp37 family. As to quaternary structure, homotrimer. Interacts with the receptor-recognizing protein Gp38. Proteolytic cleavage and release of the chaperone in the host cytosol stabilizes the folded protein.

The protein localises to the virion. Its function is as follows. Constitues the trimeric tip of the long tail fiber that mediates the attachment to the host receptor, together with the receptor-recognizing protein Gp38. Functionally, the C-terminal chaperone protein mediates homotrimerization and proper folding of the catalytic trimer. The protein is Long tail fiber protein Gp37 (37) of Selenomonas ruminantium (Bacteriophage M1).